Consider the following 207-residue polypeptide: C-type lectin domain family 2 member D (207 aa).

The Cytoplasmic portion of the chain corresponds to 1–41 (MCVTKASLPMLSPTGSPQEVEVGKILQGKRHGTISPESCAK). Phosphoserine is present on residues Ser-7 and Ser-12. Residues 42 to 62 (LYCYYGVIMVLTVAVIALSVA) traverse the membrane as a helical; Signal-anchor for type II membrane protein segment. Residues 63–207 (LSATKTEQIP…LHCQTPFFPS (145 aa)) are Extracellular-facing. Cys-80 and Cys-91 are oxidised to a cystine. The 116-residue stretch at 87-202 (VENKCFYFSE…LNSYSLHCQT (116 aa)) folds into the C-type lectin domain. Residue Asn-100 is glycosylated (N-linked (GlcNAc...) asparagine).

As to quaternary structure, homodimer; disulfide-linked. Post-translationally, N-glycosylated. Detected in fetal heart, brain, lung, chondrocytes, perichondrium and osteoblasts, and in adult splenocytes, thymocytes, lymph-node cells, osteoblasts, growth plate chondrocytes and skeletal muscle overlying the bone (at protein level). Ubiquitous. Detected in thymus, bone marrow, lung, gut, heart, skeletal muscle, ovary, spleen, ileum, liver and kidney.

Its subcellular location is the cell membrane. Functionally, receptor for KLRB1B that protects target cells against natural killer cell-mediated lysis. Inhibits osteoclast formation. Binds high molecular weight sulfated glycosaminoglycans. The protein is C-type lectin domain family 2 member D (Clec2d) of Mus musculus (Mouse).